Consider the following 382-residue polypeptide: 1-deoxy-D-xylulose 5-phosphate reductoisomerase (382 aa).

Positions 10, 11, 12, 13, 38, and 120 each coordinate NADPH. Lys-121 lines the 1-deoxy-D-xylulose 5-phosphate pocket. Position 122 (Glu-122) interacts with NADPH. Asp-146 contributes to the Mn(2+) binding site. Positions 147, 148, 172, and 195 each coordinate 1-deoxy-D-xylulose 5-phosphate. Glu-148 contacts Mn(2+). NADPH is bound at residue Gly-201. 1-deoxy-D-xylulose 5-phosphate-binding residues include Ser-208, Asn-213, Lys-214, and Glu-217. Glu-217 provides a ligand contact to Mn(2+).

Belongs to the DXR family. Mg(2+) serves as cofactor. Mn(2+) is required as a cofactor.

It carries out the reaction 2-C-methyl-D-erythritol 4-phosphate + NADP(+) = 1-deoxy-D-xylulose 5-phosphate + NADPH + H(+). The protein operates within isoprenoid biosynthesis; isopentenyl diphosphate biosynthesis via DXP pathway; isopentenyl diphosphate from 1-deoxy-D-xylulose 5-phosphate: step 1/6. In terms of biological role, catalyzes the NADPH-dependent rearrangement and reduction of 1-deoxy-D-xylulose-5-phosphate (DXP) to 2-C-methyl-D-erythritol 4-phosphate (MEP). The sequence is that of 1-deoxy-D-xylulose 5-phosphate reductoisomerase from Thermoanaerobacter pseudethanolicus (strain ATCC 33223 / 39E) (Clostridium thermohydrosulfuricum).